Reading from the N-terminus, the 180-residue chain is Acireductone dioxygenase (180 aa).

The Fe(2+) site is built by His-97, His-99, Glu-103, and His-141. Ni(2+)-binding residues include His-97, His-99, Glu-103, and His-141.

It belongs to the acireductone dioxygenase (ARD) family. As to quaternary structure, monomer. Fe(2+) serves as cofactor. Requires Ni(2+) as cofactor.

It carries out the reaction 1,2-dihydroxy-5-(methylsulfanyl)pent-1-en-3-one + O2 = 3-(methylsulfanyl)propanoate + CO + formate + 2 H(+). The enzyme catalyses 1,2-dihydroxy-5-(methylsulfanyl)pent-1-en-3-one + O2 = 4-methylsulfanyl-2-oxobutanoate + formate + 2 H(+). It functions in the pathway amino-acid biosynthesis; L-methionine biosynthesis via salvage pathway; L-methionine from S-methyl-5-thio-alpha-D-ribose 1-phosphate: step 5/6. Catalyzes 2 different reactions between oxygen and the acireductone 1,2-dihydroxy-3-keto-5-methylthiopentene (DHK-MTPene) depending upon the metal bound in the active site. Fe-containing acireductone dioxygenase (Fe-ARD) produces formate and 2-keto-4-methylthiobutyrate (KMTB), the alpha-ketoacid precursor of methionine in the methionine recycle pathway. Ni-containing acireductone dioxygenase (Ni-ARD) produces methylthiopropionate, carbon monoxide and formate, and does not lie on the methionine recycle pathway. The protein is Acireductone dioxygenase of Cronobacter sakazakii (Enterobacter sakazakii).